Consider the following 999-residue polypeptide: Tyrosine-protein kinase Mer (999 aa).

An N-terminal signal peptide occupies residues M1–R20. Over A21 to I505 the chain is Extracellular. Ig-like C2-type domains follow at residues P81–S186 and P197–S273. Residues N114, N170, N207, N215, N234, N294, N316, N329, N336, N354, N389, N395, N442, and N454 are each glycosylated (N-linked (GlcNAc...) asparagine). The cysteines at positions 115 and 175 are disulfide-linked. Residues C218 and C262 are joined by a disulfide bond. Fibronectin type-III domains follow at residues P286–G381 and A386–G484. Residues F506 to R526 traverse the membrane as a helical segment. Residues K527–M999 are Cytoplasmic-facing. Position 543 is a phosphoserine (S543). The 272-residue stretch at L587–L858 folds into the Protein kinase domain. Residues L593–V601 and K615 each bind ATP. D723 (proton acceptor) is an active-site residue. Phosphotyrosine; by autocatalysis occurs at positions 749, 753, 754, and 872. S935 carries the post-translational modification Phosphoserine.

The protein belongs to the protein kinase superfamily. Tyr protein kinase family. AXL/UFO subfamily. As to quaternary structure, interacts (upon activation) with TNK2; stimulates TNK2 autophosphorylation. Interacts (via N-terminus) with extracellular ligands LGALS3, TUB, TULP1 and GAS6. Interacts with VAV1 in a phosphotyrosine-independent manner. Interacts with TIMD4; this interaction enhances TIMD4-mediated efferocytosis. Autophosphorylated on Tyr-749, Tyr-753 and Tyr-754 in the activation loop allowing full activity. Autophosphorylated on Tyr-872 leading to recruitment of downstream partners of the signaling cascade such as PLCG2. As to expression, not expressed in normal B- and T-lymphocytes but is expressed in numerous neoplastic B- and T-cell lines. Highly expressed in testis, ovary, prostate, lung, and kidney, with lower expression in spleen, small intestine, colon, and liver.

It is found in the cell membrane. The enzyme catalyses L-tyrosyl-[protein] + ATP = O-phospho-L-tyrosyl-[protein] + ADP + H(+). In terms of biological role, receptor tyrosine kinase that transduces signals from the extracellular matrix into the cytoplasm by binding to several ligands including LGALS3, TUB, TULP1 or GAS6. Regulates many physiological processes including cell survival, migration, differentiation, and phagocytosis of apoptotic cells (efferocytosis). Ligand binding at the cell surface induces autophosphorylation of MERTK on its intracellular domain that provides docking sites for downstream signaling molecules. Following activation by ligand, interacts with GRB2 or PLCG2 and induces phosphorylation of MAPK1, MAPK2, FAK/PTK2 or RAC1. MERTK signaling plays a role in various processes such as macrophage clearance of apoptotic cells, platelet aggregation, cytoskeleton reorganization and engulfment. Functions in the retinal pigment epithelium (RPE) as a regulator of rod outer segments fragments phagocytosis. Also plays an important role in inhibition of Toll-like receptors (TLRs)-mediated innate immune response by activating STAT1, which selectively induces production of suppressors of cytokine signaling SOCS1 and SOCS3. This chain is Tyrosine-protein kinase Mer (MERTK), found in Homo sapiens (Human).